Reading from the N-terminus, the 717-residue chain is PAN2-PAN3 deadenylation complex subunit PAN3 (717 aa).

A C3H1-type zinc finger spans residues 8 to 37; sequence WARDVPCRNVIIYGFCKKKTEGCPFKHDDD. The interval 37-100 is disordered; sequence DDIATPTSTP…HTGSKSQVPK (64 aa). Over residues 62 to 90 the composition is skewed to low complexity; that stretch reads PSKISVSSLPSLNSQPSSTAPTSAPNATA. Residues 91-100 show a composition bias toward polar residues; that stretch reads HTGSKSQVPK. The segment at 323–585 is pseudokinase domain; the sequence is QLFPSGGNLP…ATIIEKYIGL (263 aa). ATP is bound by residues Arg-378, 428-435, and 482-483; these read DYYPNATS and DK. Residues 586-624 are a coiled coil; sequence DVVFKVMEAQQTYSEYAENVLSRELENGRLFRLICKLNF. The segment at 625–717 is knob domain; sequence IFGRVENRLD…VDKTFRAMTL (93 aa).

Belongs to the protein kinase superfamily. PAN3 family. Homodimer. Forms a heterotrimer with a catalytic subunit PAN2 to form the poly(A)-nuclease (PAN) deadenylation complex. Interacts (via PAM-2 motif) with poly(A)-binding protein PAB1 (via PABC domain), conferring substrate specificity of the enzyme complex.

The protein localises to the cytoplasm. Regulatory subunit of the poly(A)-nuclease (PAN) deadenylation complex, one of two cytoplasmic mRNA deadenylases involved in mRNA turnover. PAN specifically shortens poly(A) tails of RNA and the activity is stimulated by poly(A)-binding protein PAB1. PAN deadenylation is followed by rapid degradation of the shortened mRNA tails by the CCR4-NOT complex. Deadenylated mRNAs are then degraded by two alternative mechanisms, namely exosome-mediated 3'-5' exonucleolytic degradation, or deadenylation-dependent mRNA decaping and subsequent 5'-3' exonucleolytic degradation by XRN1. May also be involved in post-transcriptional maturation of mRNA poly(A) tails. PAN3 acts as a positive regulator for PAN activity, recruiting the catalytic subunit PAN2 to mRNA via its interaction with RNA and with PAB1. This chain is PAN2-PAN3 deadenylation complex subunit PAN3, found in Candida glabrata (strain ATCC 2001 / BCRC 20586 / JCM 3761 / NBRC 0622 / NRRL Y-65 / CBS 138) (Yeast).